A 644-amino-acid polypeptide reads, in one-letter code: Chaperone protein DnaK (644 aa).

Position 199 is a phosphothreonine; by autocatalysis (T199). The disordered stretch occupies residues 605–644; sequence KKSSEGQAAQGQTQSQESTKPVEEGVVDAEFEEVKEEDKK. Polar residues predominate over residues 609-623; it reads EGQAAQGQTQSQEST. A compositionally biased stretch (acidic residues) spans 629–644; it reads GVVDAEFEEVKEEDKK.

This sequence belongs to the heat shock protein 70 family.

Acts as a chaperone. This Legionella pneumophila (strain Paris) protein is Chaperone protein DnaK.